Here is a 182-residue protein sequence, read N- to C-terminus: UPF0316 protein BCAH820_3389 (182 aa).

3 helical membrane-spanning segments follow: residues 6-26 (LIFV…ILLV), 32-52 (SAAA…GIVF), and 58-78 (WMNI…GGYI).

It belongs to the UPF0316 family.

It is found in the cell membrane. This Bacillus cereus (strain AH820) protein is UPF0316 protein BCAH820_3389.